Here is a 443-residue protein sequence, read N- to C-terminus: Phosphoglucosamine mutase (443 aa).

Ser-103 (phosphoserine intermediate) is an active-site residue. Residues Ser-103, Asp-244, Asp-246, and Asp-248 each contribute to the Mg(2+) site. Ser-103 bears the Phosphoserine mark.

Belongs to the phosphohexose mutase family. Mg(2+) is required as a cofactor. In terms of processing, activated by phosphorylation.

It carries out the reaction alpha-D-glucosamine 1-phosphate = D-glucosamine 6-phosphate. Its function is as follows. Catalyzes the conversion of glucosamine-6-phosphate to glucosamine-1-phosphate. The polypeptide is Phosphoglucosamine mutase (Pelagibacter ubique (strain HTCC1062)).